Reading from the N-terminus, the 609-residue chain is Phosphoenolpyruvate carboxykinase [GTP] (609 aa).

Substrate contacts are provided by residues Arg-81 and 220 to 222 (YGG). Residues Lys-229 and His-249 each coordinate Mn(2+). Ser-271 contacts substrate. 272-277 (ACGKTN) provides a ligand contact to GTP. The active site involves Cys-273. Asp-296 serves as a coordination point for Mn(2+). Substrate is bound at residue 387 to 389 (NSR). Residues Arg-389, Arg-420, and 515-518 (FGEN) each bind GTP.

Belongs to the phosphoenolpyruvate carboxykinase [GTP] family. Monomer. The cofactor is Mn(2+).

It is found in the cytoplasm. It carries out the reaction oxaloacetate + GTP = phosphoenolpyruvate + GDP + CO2. Its pathway is carbohydrate biosynthesis; gluconeogenesis. Catalyzes the conversion of oxaloacetate (OAA) to phosphoenolpyruvate (PEP), the rate-limiting step in the metabolic pathway that produces glucose from lactate and other precursors derived from the citric acid cycle. The polypeptide is Phosphoenolpyruvate carboxykinase [GTP] (Mycobacterium ulcerans (strain Agy99)).